Consider the following 37-residue polypeptide: Large ribosomal subunit protein bL36B (37 aa).

The protein belongs to the bacterial ribosomal protein bL36 family.

The protein is Large ribosomal subunit protein bL36B of Saccharopolyspora erythraea (strain ATCC 11635 / DSM 40517 / JCM 4748 / NBRC 13426 / NCIMB 8594 / NRRL 2338).